The primary structure comprises 412 residues: Imidazolonepropionase (412 aa).

2 residues coordinate Fe(3+): His-76 and His-78. Residues His-76 and His-78 each coordinate Zn(2+). Residues Arg-85, Tyr-148, and His-181 each contribute to the 4-imidazolone-5-propanoate site. N-formimidoyl-L-glutamate is bound at residue Tyr-148. His-242 is a Fe(3+) binding site. His-242 contributes to the Zn(2+) binding site. Glu-245 contacts 4-imidazolone-5-propanoate. Asp-317 serves as a coordination point for Fe(3+). Residue Asp-317 coordinates Zn(2+). 2 residues coordinate N-formimidoyl-L-glutamate: Asn-319 and Gly-321. Ser-322 is a binding site for 4-imidazolone-5-propanoate.

This sequence belongs to the metallo-dependent hydrolases superfamily. HutI family. It depends on Zn(2+) as a cofactor. The cofactor is Fe(3+).

Its subcellular location is the cytoplasm. It catalyses the reaction 4-imidazolone-5-propanoate + H2O = N-formimidoyl-L-glutamate. It functions in the pathway amino-acid degradation; L-histidine degradation into L-glutamate; N-formimidoyl-L-glutamate from L-histidine: step 3/3. In terms of biological role, catalyzes the hydrolytic cleavage of the carbon-nitrogen bond in imidazolone-5-propanoate to yield N-formimidoyl-L-glutamate. It is the third step in the universal histidine degradation pathway. This chain is Imidazolonepropionase, found in Staphylococcus aureus (strain MSSA476).